The following is a 1409-amino-acid chain: Tensin-2 (1409 aa).

Residues 1–35 (MKSSGPVERLLRALGRRDSSRAASRPRKAEPHSFR) form a disordered region. Positions 9–20 (RLLRALGRRDSS) are enriched in basic and acidic residues. A Phorbol-ester/DAG-type zinc finger spans residues 31–79 (PHSFREKVFRKKPPVCAVCKVTIDGTGVSCRVCKVATHRKCEAKVTSAC). Residue threonine 91 is modified to Phosphothreonine. Residues serine 118 and serine 120 each carry the phosphoserine modification. The 173-residue stretch at 122–294 (DPLMERRWDL…SYFSGLLSGS (173 aa)) folds into the Phosphatase tensin-type domain. Cysteine 231 (phosphocysteine intermediate) is an active-site residue. In terms of domain architecture, C2 tensin-type spans 299–425 (SSPLFLHYVL…ASVEFVFSSS (127 aa)). At serine 455 the chain carries Phosphoserine. Tyrosine 456 carries the phosphotyrosine modification. The tract at residues 462-536 (HHEDSVDGSL…SPGRPPPTAA (75 aa)) is disordered. Phosphoserine is present on serine 466. Threonine 474 is subject to Phosphothreonine. At serine 481 the chain carries Phosphoserine. A Phosphotyrosine modification is found at tyrosine 483. Residues 491–506 (RQTPPAPSPEPPPPPM) show a composition bias toward pro residues. Arginine 555 carries the post-translational modification Omega-N-methylarginine. 3 disordered regions span residues 562-582 (AILD…GVYP), 812-1098 (PGEG…SSPA), and 1111-1130 (LSDN…QSNV). Residues serine 820, serine 825, serine 830, serine 832, serine 835, and serine 845 each carry the phosphoserine modification. Polar residues-rich tracts occupy residues 900-918 (SASS…SSPV) and 930-940 (RSPTSAPTQRL). Threonine 910 is subject to Phosphothreonine. 3 positions are modified to phosphoserine: serine 931, serine 941, and serine 972. Residues 968–982 (PLAPSPVSPTFPPSS) show a composition bias toward pro residues. Position 977 is a phosphothreonine (threonine 977). 2 positions are modified to phosphoserine: serine 991 and serine 1003. Pro residues predominate over residues 1046 to 1056 (PEPPQSSPTPA). Residues 1140-1247 (WYKPHLSRDQ…SLPCCLRIPS (108 aa)) enclose the SH2 domain. Threonine 1182 is modified (phosphothreonine). Serine 1247 carries the post-translational modification Phosphoserine. In terms of domain architecture, PTB spans 1275 to 1408 (ACSVLYLTSV…FITKVLLGQR (134 aa)).

Belongs to the PTEN phosphatase protein family. Interacts with AXL. Interacts with SYK; leading to its phosphorylation. Interacts with SQSTM1 (via PB1 domain); the interaction leads to sequestration of TNS2 in cytoplasmic aggregates with SQSTM1 and promotes TNS2 ubiquitination and proteasomal degradation. In terms of processing, ubiquitinated following sequestration in cytoplasmic aggregates with SQSTM1, leading to proteasomal degradation. In terms of tissue distribution, detected in heart, kidney, brain, thymus, spleen, liver, placenta, lung, skeletal muscle and small intestine.

It localises to the cell junction. It is found in the focal adhesion. The protein localises to the cell membrane. The protein resides in the cytoplasm. The enzyme catalyses O-phospho-L-tyrosyl-[protein] + H2O = L-tyrosyl-[protein] + phosphate. Tyrosine-protein phosphatase which regulates cell motility, proliferation and muscle-response to insulin. Phosphatase activity is mediated by binding to phosphatidylinositol-3,4,5-triphosphate (PtdIns(3,4,5)P3) via the SH2 domain. In muscles and under catabolic conditions, dephosphorylates IRS1 leading to its degradation and muscle atrophy. Negatively regulates PI3K-AKT pathway activation. Dephosphorylates nephrin NPHS1 in podocytes which regulates activity of the mTORC1 complex. Under normal glucose conditions, NPHS1 outcompetes IRS1 for binding to phosphatidylinositol 3-kinase (PI3K) which balances mTORC1 activity but high glucose conditions lead to up-regulation of TNS2, increased NPHS1 dephosphorylation and activation of mTORC1, contributing to podocyte hypertrophy and proteinuria. Required for correct podocyte morphology, podocyte-glomerular basement membrane interaction and integrity of the glomerular filtration barrier. Enhances RHOA activation in the presence of DLC1. Plays a role in promoting DLC1-dependent remodeling of the extracellular matrix. This Homo sapiens (Human) protein is Tensin-2 (TNS2).